Consider the following 310-residue polypeptide: Ribosomal RNA small subunit methyltransferase H (310 aa).

S-adenosyl-L-methionine-binding positions include 33–35 (GGH), Asp-52, Phe-79, Asp-98, and Gln-105.

This sequence belongs to the methyltransferase superfamily. RsmH family.

It is found in the cytoplasm. It catalyses the reaction cytidine(1402) in 16S rRNA + S-adenosyl-L-methionine = N(4)-methylcytidine(1402) in 16S rRNA + S-adenosyl-L-homocysteine + H(+). In terms of biological role, specifically methylates the N4 position of cytidine in position 1402 (C1402) of 16S rRNA. The protein is Ribosomal RNA small subunit methyltransferase H of Campylobacter jejuni subsp. jejuni serotype O:23/36 (strain 81-176).